The chain runs to 556 residues: Oxygen-dependent choline dehydrogenase (556 aa).

Position 4 to 33 (4 to 33 (DYIIIGAGSAGNVLATRLTEDPNTTVLLLE)) interacts with FAD. His-473 acts as the Proton acceptor in catalysis.

It belongs to the GMC oxidoreductase family. FAD is required as a cofactor.

It localises to the cell membrane. It catalyses the reaction choline + A = betaine aldehyde + AH2. The catalysed reaction is betaine aldehyde + NAD(+) + H2O = glycine betaine + NADH + 2 H(+). The protein operates within amine and polyamine biosynthesis; betaine biosynthesis via choline pathway; betaine aldehyde from choline (cytochrome c reductase route): step 1/1. Involved in the biosynthesis of the osmoprotectant glycine betaine. Catalyzes the oxidation of choline to betaine aldehyde and betaine aldehyde to glycine betaine at the same rate. This Escherichia coli O6:H1 (strain CFT073 / ATCC 700928 / UPEC) protein is Oxygen-dependent choline dehydrogenase.